We begin with the raw amino-acid sequence, 64 residues long: MSKAKTHSGAAKRFKKTASGYKHKHAFKSHILTKMTTKRKRQLRGTSLLNAADKPAVDRMLRAN.

The segment covering 1–28 has biased composition (basic residues); the sequence is MSKAKTHSGAAKRFKKTASGYKHKHAFK. The disordered stretch occupies residues 1-51; that stretch reads MSKAKTHSGAAKRFKKTASGYKHKHAFKSHILTKMTTKRKRQLRGTSLLNA.

It belongs to the bacterial ribosomal protein bL35 family.

In Saccharophagus degradans (strain 2-40 / ATCC 43961 / DSM 17024), this protein is Large ribosomal subunit protein bL35.